A 373-amino-acid chain; its full sequence is Cell division protein FtsZ 1 (373 aa).

Residues 51-55, 138-140, E169, R173, and D216 each bind GTP; these read GAGCN and GTG. The interval 354 to 373 is disordered; sequence EESYFGEEERRPIKLDLDEL. Basic and acidic residues predominate over residues 360–373; it reads EEERRPIKLDLDEL.

The protein belongs to the FtsZ family. As to quaternary structure, homodimer. Polymerizes to form a dynamic ring structure in a strictly GTP-dependent manner. Interacts directly with several other division proteins.

Its subcellular location is the cytoplasm. Functionally, essential cell division protein that forms a contractile ring structure (Z ring) at the future cell division site. The regulation of the ring assembly controls the timing and the location of cell division. One of the functions of the FtsZ ring is to recruit other cell division proteins to the septum to produce a new cell wall between the dividing cells. Binds GTP and shows GTPase activity. The polypeptide is Cell division protein FtsZ 1 (Thermococcus kodakarensis (strain ATCC BAA-918 / JCM 12380 / KOD1) (Pyrococcus kodakaraensis (strain KOD1))).